The primary structure comprises 736 residues: DNA topoisomerase 1 (736 aa).

The region spanning 2-113 (KHLIIVESPA…SYPRIVFHEI (112 aa)) is the Toprim domain. Residues Glu-8 and Asp-82 each contribute to the Mg(2+) site. The Topo IA-type catalytic domain occupies 129–552 (DMFKVNAQQA…DFYYPFMDKI (424 aa)). An interaction with DNA region spans residues 163 to 168 (SAGRVQ). Residue Tyr-297 is the O-(5'-phospho-DNA)-tyrosine intermediate of the active site. 4 consecutive C4-type zinc fingers follow at residues 572–598 (CPKC…YPKC), 616–642 (CEKC…YPEC), 663–689 (CPEC…YPKC), and 702–725 (CEKC…CIQC).

This sequence belongs to the type IA topoisomerase family. Monomer. Mg(2+) is required as a cofactor.

It carries out the reaction ATP-independent breakage of single-stranded DNA, followed by passage and rejoining.. Functionally, releases the supercoiling and torsional tension of DNA, which is introduced during the DNA replication and transcription, by transiently cleaving and rejoining one strand of the DNA duplex. Introduces a single-strand break via transesterification at a target site in duplex DNA. The scissile phosphodiester is attacked by the catalytic tyrosine of the enzyme, resulting in the formation of a DNA-(5'-phosphotyrosyl)-enzyme intermediate and the expulsion of a 3'-OH DNA strand. The free DNA strand then undergoes passage around the unbroken strand, thus removing DNA supercoils. Finally, in the religation step, the DNA 3'-OH attacks the covalent intermediate to expel the active-site tyrosine and restore the DNA phosphodiester backbone. This is DNA topoisomerase 1 from Helicobacter pylori (strain J99 / ATCC 700824) (Campylobacter pylori J99).